The chain runs to 94 residues: DNA-binding protein HU (94 aa).

The protein belongs to the bacterial histone-like protein family.

Functionally, histone-like DNA-binding protein which is capable of wrapping DNA to stabilize it, and thus to prevent its denaturation under extreme environmental conditions. This Xylella fastidiosa (strain 9a5c) protein is DNA-binding protein HU (hup).